The following is a 221-amino-acid chain: Transmembrane emp24 domain-containing protein 3 (221 aa).

The N-terminal stretch at 1–25 (MVHEAPHASSFQMLLQLLLLLLLRA) is a signal peptide. At 28 to 184 (LRSAELTFEL…RAEDLNSRVS (157 aa)) the chain is on the lumenal side. The 83-residue stretch at 42-124 (KQCFHEEVEQ…HKTVYFDFQV (83 aa)) folds into the GOLD domain. Dimethylated arginine is present on Arg-103. Residues 185 to 205 (YWSVGETIALFVVSFSQVLLL) form a helical membrane-spanning segment. Residues 206-221 (KSFFTEKRPVNRAVHS) lie on the Cytoplasmic side of the membrane. The COPII vesicle coat-binding signature appears at 208-209 (FF). Positions 208-221 (FFTEKRPVNRAVHS) match the COPI vesicle coat-binding motif.

Belongs to the EMP24/GP25L family. Monomer in endoplasmic reticulum, endoplasmic reticulum-Golgi intermediate compartment and cis-Golgi network. Interacts (via C-terminus) with COPG1; the interaction involves dimeric TMED3; however, there are conflicting reports on the interaction. Interacts with GORASP1 and GORASP2.

The protein localises to the endoplasmic reticulum-Golgi intermediate compartment membrane. The protein resides in the golgi apparatus. It localises to the cis-Golgi network membrane. It is found in the golgi stack membrane. Its subcellular location is the endoplasmic reticulum membrane. The protein localises to the cytoplasmic vesicle. The protein resides in the COPI-coated vesicle membrane. Potential role in vesicular protein trafficking, mainly in the early secretory pathway. Contributes to the coupled localization of TMED2 and TMED10 in the cis-Golgi network. The chain is Transmembrane emp24 domain-containing protein 3 (Tmed3) from Mus musculus (Mouse).